The primary structure comprises 141 residues: Large ribosomal subunit protein uL11 (141 aa).

This sequence belongs to the universal ribosomal protein uL11 family. As to quaternary structure, part of the ribosomal stalk of the 50S ribosomal subunit. Interacts with L10 and the large rRNA to form the base of the stalk. L10 forms an elongated spine to which L12 dimers bind in a sequential fashion forming a multimeric L10(L12)X complex. In terms of processing, one or more lysine residues are methylated.

Functionally, forms part of the ribosomal stalk which helps the ribosome interact with GTP-bound translation factors. The polypeptide is Large ribosomal subunit protein uL11 (Streptococcus agalactiae serotype Ia (strain ATCC 27591 / A909 / CDC SS700)).